The chain runs to 660 residues: MDGLVAQCSARLLQQEKEIKSLTAEIDRLKNCSYLEASPSLEQLREENLKLKYRLNILRRSLQAERKRPTKNMININSRLQELFGCAIKAAYPDLENPPLVVTPSQQPKFGDYQCNSAMGISQMLKAKEQKVSPREIAENITKHLPNNEYIDRVEIAGPGFINVHLRKDFVSEQLTNLLVNGVQLPVLGENEKVIVDFSSPNIAKEMHVGHLRSTIIGESMSRLFEFAGYNVLRLNHVGDWGTQFGMLIAHLQDKFPDYLTVSPPIGDLQAFYKESKKRFDTEEEFKKRAYECVVLLQSKNPDIMKAWNLICDVSREEFNKIYDALDITLIERGESFYQDRMKDIVKEFEDKGFVQVDDGRKIVFVPGCSVPLTIVKSDGGYTYDTSDLAAIKQRLFEEKANKIIYVVDNGQATHFQTVFAAAQMIGWYDPKVTRVAHVGFGVVLGEDKKKFKTRSGETVRLMDLLEEGLRRSMDKLKEKERDKVLTEEELKAAQTSVAYGCIKYADLSHNRLNDYVFSFDKMLDDRGNTAAYLLYAFTRIRSIARLANIDEEMLQRAARETKIILDHEKEWKLGRCILRFPEILQKILDDLFLHTLCDYIYELATTFTEFYDSCYCVEKDRQTGKVLKVNMWRMLLCEAVAAVMAKGFDILGIKPVQRM.

Met1 bears the N-acetylmethionine mark. A could be involved in the assembly of the multisynthetase complex region spans residues Met1–Asn72. L-arginine is bound by residues Ser200–Asn202, His211, Tyr384, Asp388, and Gln412. The 'HIGH' region motif lies at Pro201–Leu212. The tract at residues Asn529 to Ser543 is interaction with tRNA.

This sequence belongs to the class-I aminoacyl-tRNA synthetase family. Interacts (via N-terminus) with AIMP1 (via N-terminus); this stimulates its catalytic activity. Interacts (via N-terminus) with LARS2 (via C-terminus). Monomer. Part of a multisubunit complex that groups tRNA ligases for Arg (RARS1), Asp (DARS1), Gln (QARS1), Ile (IARS1), Leu (LARS1), Lys (KARS1), Met (MARS1) the bifunctional ligase for Glu and Pro (EPRS1) and the auxiliary subunits AIMP1/p43, AIMP2/p38 and EEF1E1/p18. Interacts with QARS1. Part of a complex composed of RARS1, QARS1 and AIMP1. In terms of tissue distribution, detected in dorsal root ganglion.

The protein resides in the cytoplasm. The protein localises to the cytosol. The catalysed reaction is tRNA(Arg) + L-arginine + ATP = L-arginyl-tRNA(Arg) + AMP + diphosphate. Its function is as follows. Forms part of a macromolecular complex that catalyzes the attachment of specific amino acids to cognate tRNAs during protein synthesis. Modulates the secretion of AIMP1 and may be involved in generation of the inflammatory cytokine EMAP2 from AIMP1. The protein is Arginine--tRNA ligase, cytoplasmic (Rars1) of Rattus norvegicus (Rat).